The following is a 361-amino-acid chain: Beta-hexosaminidase (361 aa).

Substrate contacts are provided by residues Asp-69, Arg-77, Arg-144, and 174-175 (KH). His-187 serves as the catalytic Proton donor/acceptor. Residue Asp-258 is the Nucleophile of the active site.

Belongs to the glycosyl hydrolase 3 family. NagZ subfamily.

The protein resides in the cytoplasm. The enzyme catalyses Hydrolysis of terminal non-reducing N-acetyl-D-hexosamine residues in N-acetyl-beta-D-hexosaminides.. It participates in cell wall biogenesis; peptidoglycan recycling. Its function is as follows. Plays a role in peptidoglycan recycling by cleaving the terminal beta-1,4-linked N-acetylglucosamine (GlcNAc) from peptide-linked peptidoglycan fragments, giving rise to free GlcNAc, anhydro-N-acetylmuramic acid and anhydro-N-acetylmuramic acid-linked peptides. The sequence is that of Beta-hexosaminidase from Neisseria gonorrhoeae (strain NCCP11945).